The chain runs to 339 residues: Uricase (339 aa).

Catalysis depends on charge relay system residues lysine 33 and threonine 78. Residues threonine 78, aspartate 79, phenylalanine 201, arginine 218, valine 266, glutamine 267, and asparagine 293 each contribute to the urate site. Histidine 295 acts as the Charge relay system in catalysis. The Microbody targeting signal motif lies at 337–339; sequence SHL.

It belongs to the uricase family.

The protein localises to the peroxisome. It carries out the reaction urate + O2 + H2O = 5-hydroxyisourate + H2O2. Its pathway is purine metabolism; urate degradation; (S)-allantoin from urate: step 1/3. Its function is as follows. Catalyzes the oxidation of uric acid to 5-hydroxyisourate, which is further processed to form (S)-allantoin. This Drosophila subobscura (Fruit fly) protein is Uricase (Uro).